Reading from the N-terminus, the 212-residue chain is MNSLSTSAFSPVAFSLGLLLVMATAFPTPERLEEDAKGDATSDKMLFTSPDKTEELIKYILGKISAMRKEMCEKYEKCENSKEVLAENNLNLPKMAEKDGCFQSGFNQETCLMRITTGLVEFQIYLDYLQKEYESNKGNVEAVQISTKALIQTLRQKGKNPDKATTPNPTTNAGLLDKLQSQNEWMKNTKIILILRSLEDFLQFSLRAIRIM.

The signal sequence occupies residues 1–29; that stretch reads MNSLSTSAFSPVAFSLGLLLVMATAFPTP. Cys72 and Cys78 form a disulfide bridge. Residue Ser81 is modified to Phosphoserine. A disulfide bond links Cys101 and Cys111. Residues 156 to 175 form a disordered region; sequence QKGKNPDKATTPNPTTNAGL. The span at 163–175 shows a compositional bias: polar residues; it reads KATTPNPTTNAGL.

The protein belongs to the IL-6 superfamily. In terms of assembly, component of a hexamer of two molecules each of IL6, IL6R and IL6ST; first binds to IL6R to associate with the signaling subunit IL6ST. Interacts with IL6R (via the N-terminal ectodomain); this interaction may be affected by IL6R-binding with SORL1, hence decreasing IL6 cis signaling. Interacts with SORL1 (via the N-terminal ectodomain); this interaction leads to IL6 internalization and lysosomal degradation. May form a trimeric complex with the soluble SORL1 ectodomain and soluble IL6R receptor; this interaction might stabilize circulating IL6, hence promoting IL6 trans signaling.

The protein localises to the secreted. Its function is as follows. Cytokine with a wide variety of biological functions in immunity, tissue regeneration, and metabolism. Binds to IL6R, then the complex associates to the signaling subunit IL6ST/gp130 to trigger the intracellular IL6-signaling pathway. The interaction with the membrane-bound IL6R and IL6ST stimulates 'classic signaling', whereas the binding of IL6 and soluble IL6R to IL6ST stimulates 'trans-signaling'. Alternatively, 'cluster signaling' occurs when membrane-bound IL6:IL6R complexes on transmitter cells activate IL6ST receptors on neighboring receiver cells. In terms of biological role, IL6 is a potent inducer of the acute phase response. Rapid production of IL6 contributes to host defense during infection and tissue injury, but excessive IL6 synthesis is involved in disease pathology. In the innate immune response, is synthesized by myeloid cells, such as macrophages and dendritic cells, upon recognition of pathogens through toll-like receptors (TLRs) at the site of infection or tissue injury. In the adaptive immune response, is required for the differentiation of B cells into immunoglobulin-secreting cells. Plays a major role in the differentiation of CD4(+) T cell subsets. Essential factor for the development of T follicular helper (Tfh) cells that are required for the induction of germinal-center formation. Required to drive naive CD4(+) T cells to the Th17 lineage. Also required for proliferation of myeloma cells and the survival of plasmablast cells. Acts as an essential factor in bone homeostasis and on vessels directly or indirectly by induction of VEGF, resulting in increased angiogenesis activity and vascular permeability. Induces, through 'trans-signaling' and synergistically with IL1B and TNF, the production of VEGF. Involved in metabolic controls, is discharged into the bloodstream after muscle contraction increasing lipolysis and improving insulin resistance. 'Trans-signaling' in central nervous system also regulates energy and glucose homeostasis. Mediates, through GLP-1, crosstalk between insulin-sensitive tissues, intestinal L cells and pancreatic islets to adapt to changes in insulin demand. Also acts as a myokine. Plays a protective role during liver injury, being required for maintenance of tissue regeneration. Also has a pivotal role in iron metabolism by regulating HAMP/hepcidin expression upon inflammation or bacterial infection. Through activation of IL6ST-YAP-NOTCH pathway, induces inflammation-induced epithelial regeneration. The sequence is that of Interleukin-6 (IL6) from Sus scrofa (Pig).